A 324-amino-acid polypeptide reads, in one-letter code: Pepsin-2B (324 aa).

The Peptidase A1 domain occupies 14-321; sequence YYGVISIGTP…DRTNNKVGFA (308 aa). Asp-32 is an active-site residue. Cysteines 45 and 50 form a disulfide. A disordered region spans residues 86 to 109; the sequence is QDTVSVGGGSDPNQELGESQTEPG. Over residues 96–107 the composition is skewed to polar residues; it reads DPNQELGESQTE. A disulfide bridge connects residues Cys-206 and Cys-209. Residue Asp-214 is part of the active site. Cysteines 247 and 280 form a disulfide.

Belongs to the peptidase A1 family.

The polypeptide is Pepsin-2B (Gadus morhua (Atlantic cod)).